A 239-amino-acid polypeptide reads, in one-letter code: Fatty acid metabolism regulator protein (239 aa).

Positions 6 to 74 constitute an HTH gntR-type domain; it reads KGPASFAEKY…HGKPTRVNNF (69 aa). Residues 34 to 53 constitute a DNA-binding region (H-T-H motif); it reads ERELSELIGVTRTTLREVLQ.

Homodimer.

It localises to the cytoplasm. Its function is as follows. Multifunctional regulator of fatty acid metabolism. In Shewanella halifaxensis (strain HAW-EB4), this protein is Fatty acid metabolism regulator protein.